We begin with the raw amino-acid sequence, 181 residues long: UPF0397 protein STER_0346 (181 aa).

5 helical membrane-spanning segments follow: residues 11–31 (ATGI…IPIF), 45–65 (LFSV…GHAL), 72–92 (GNIS…IGLF), 109–129 (IWFN…VTPI), and 147–167 (FVAG…LLAI).

Belongs to the UPF0397 family.

It localises to the cell membrane. This chain is UPF0397 protein STER_0346, found in Streptococcus thermophilus (strain ATCC BAA-491 / LMD-9).